The primary structure comprises 435 residues: Trigger factor (435 aa).

In terms of domain architecture, PPIase FKBP-type spans 162 to 247 (GDRINIDYRG…LSGVESSKLP (86 aa)).

The protein belongs to the FKBP-type PPIase family. Tig subfamily.

The protein localises to the cytoplasm. The enzyme catalyses [protein]-peptidylproline (omega=180) = [protein]-peptidylproline (omega=0). Involved in protein export. Acts as a chaperone by maintaining the newly synthesized protein in an open conformation. Functions as a peptidyl-prolyl cis-trans isomerase. The protein is Trigger factor of Nitrosospira multiformis (strain ATCC 25196 / NCIMB 11849 / C 71).